The sequence spans 160 residues: Putative 4-hydroxy-4-methyl-2-oxoglutarate aldolase (160 aa).

Substrate is bound by residues 75–78 (GDLI) and Arg97. Position 98 (Asp98) interacts with a divalent metal cation.

It belongs to the class II aldolase/RraA-like family. In terms of assembly, homotrimer. It depends on a divalent metal cation as a cofactor.

The enzyme catalyses 4-hydroxy-4-methyl-2-oxoglutarate = 2 pyruvate. The catalysed reaction is oxaloacetate + H(+) = pyruvate + CO2. Functionally, catalyzes the aldol cleavage of 4-hydroxy-4-methyl-2-oxoglutarate (HMG) into 2 molecules of pyruvate. Also contains a secondary oxaloacetate (OAA) decarboxylase activity due to the common pyruvate enolate transition state formed following C-C bond cleavage in the retro-aldol and decarboxylation reactions. The polypeptide is Putative 4-hydroxy-4-methyl-2-oxoglutarate aldolase (Rhodospirillum centenum (strain ATCC 51521 / SW)).